A 539-amino-acid polypeptide reads, in one-letter code: MICOS complex subunit MIC60 (539 aa).

A mitochondrion-targeting transit peptide spans 1-16; that stretch reads MLRTTASRKIVLRRGL. The Mitochondrial matrix portion of the chain corresponds to 17-36; the sequence is ASINTGTTVASKKASHKFRN. A helical membrane pass occupies residues 37-56; that stretch reads TFWTIALSATAFYAGGIIYS. At 57-539 the chain is on the mitochondrial intermembrane side; sequence QKNDKFGDFF…EILDCEIRTL (483 aa). Positions 172–267 form a coiled coil; that stretch reads NSIKKSNQNM…ELLQAKHANE (96 aa).

Belongs to the MICOS complex subunit Mic60 family. Component of the mitochondrial contact site and cristae organizing system (MICOS) complex.

It localises to the mitochondrion inner membrane. In terms of biological role, component of the MICOS complex, a large protein complex of the mitochondrial inner membrane that plays crucial roles in the maintenance of crista junctions, inner membrane architecture, and formation of contact sites to the outer membrane. Plays a role in keeping cristae membranes connected to the inner boundary membrane. Also promotes protein import via the mitochondrial intermembrane space assembly (MIA) pathway. The protein is MICOS complex subunit MIC60 (MIC60) of Saccharomyces cerevisiae (strain YJM789) (Baker's yeast).